We begin with the raw amino-acid sequence, 247 residues long: uncharacterized protein (247 aa).

Helical transmembrane passes span 108–128 (WYIN…FLII), 136–156 (IFSV…NIIC), and 194–214 (GAKL…LFFI).

The protein localises to the membrane. This is an uncharacterized protein from Caenorhabditis elegans.